Here is a 423-residue protein sequence, read N- to C-terminus: Histidine--tRNA ligase 2 (423 aa).

This sequence belongs to the class-II aminoacyl-tRNA synthetase family. As to quaternary structure, homodimer.

It localises to the cytoplasm. It carries out the reaction tRNA(His) + L-histidine + ATP = L-histidyl-tRNA(His) + AMP + diphosphate + H(+). This is Histidine--tRNA ligase 2 from Bacillus cereus (strain ATCC 10987 / NRS 248).